The primary structure comprises 327 residues: MLPSRRKAAQLPWEDGRARLLPGGLRRKCSIFHLFIAFLLLVFFSLLWLQLSCSGDMAQVTRGQGQETSGPPRACPPEPPPEHWEEDESWGPHRLAVLVPFRERFEELLVFVPHMHRFLSRKRIQHHIYVLNQVDHFRFNRAALINVGFLESSNSTDYIAMHDVDLLPLNEELDYGFPEAGPFHVASPELHPLYHYKTYVGGILLLSKQHYQLCNGMSNRFWGWGREDDEFYRRIKGAGLQLFRPSGITTGYQTFRHLHDPAWRKRDQKRIAAQKQEQFKVDREGGLNTVKYRVDSRTALSIGGAPCTVLNVMLDCDKTATPWCIFG.

The Cytoplasmic segment spans residues 1–30; that stretch reads MLPSRRKAAQLPWEDGRARLLPGGLRRKCS. Residues 31 to 51 form a helical; Signal-anchor for type II membrane protein membrane-spanning segment; that stretch reads IFHLFIAFLLLVFFSLLWLQL. Topologically, residues 52 to 327 are lumenal; it reads SCSGDMAQVT…KTATPWCIFG (276 aa). A disordered region spans residues 61–88; that stretch reads TRGQGQETSGPPRACPPEPPPEHWEEDE. Residues 100–104 and 139–141 contribute to the UDP-alpha-D-galactose site; these read PFRER and FNR. Asparagine 154 is a glycosylation site (N-linked (GlcNAc...) asparagine). UDP-alpha-D-galactose-binding positions include 164-165, tyrosine 194, and tryptophan 224; that span reads VD. Aspartate 165 is a binding site for Mn(2+). N-acetyl-D-glucosamine is bound at residue 226-229; the sequence is REDD. Residue histidine 257 coordinates Mn(2+). UDP-alpha-D-galactose contacts are provided by residues 257–259 and arginine 266; that span reads HLH.

It belongs to the glycosyltransferase 7 family. Mn(2+) serves as cofactor.

It is found in the golgi apparatus. Its subcellular location is the golgi stack membrane. The enzyme catalyses 3-O-(beta-D-xylosyl)-L-seryl-[protein] + UDP-alpha-D-galactose = 3-O-(beta-D-galactosyl-(1-&gt;4)-beta-D-xylosyl)-L-seryl-[protein] + UDP + H(+). Its pathway is protein modification; protein glycosylation. Required for the biosynthesis of the tetrasaccharide linkage region of proteoglycans, especially for small proteoglycans in skin fibroblasts. This Mus musculus (Mouse) protein is Beta-1,4-galactosyltransferase 7 (B4galt7).